Reading from the N-terminus, the 228-residue chain is uncharacterized protein (228 aa).

Positions 1–23 (MIRHTRLLLASLCLIATGARASA) are cleaved as a signal peptide.

This is an uncharacterized protein from Methylorubrum extorquens (strain ATCC 14718 / DSM 1338 / JCM 2805 / NCIMB 9133 / AM1) (Methylobacterium extorquens).